We begin with the raw amino-acid sequence, 286 residues long: Aquaporin PIP1-1 (286 aa).

The interval methionine 1–proline 34 is disordered. Topologically, residues methionine 1–glycine 54 are cytoplasmic. The helical transmembrane segment at isoleucine 55–valine 75 threads the bilayer. The Extracellular portion of the chain corresponds to valine 76–glutamine 88. The helical transmembrane segment at glycine 89–serine 109 threads the bilayer. The Cytoplasmic portion of the chain corresponds to glycine 110–arginine 131. Positions asparagine 114–alanine 116 match the NPA 1 motif. A helical transmembrane segment spans residues alanine 132–glycine 152. Residues tyrosine 153 to lysine 174 are Extracellular-facing. Residues glycine 175 to alanine 195 form a helical membrane-spanning segment. Topologically, residues threonine 196–proline 208 are cytoplasmic. Residues isoleucine 209–isoleucine 229 traverse the membrane as a helical segment. The Extracellular portion of the chain corresponds to threonine 230–tryptophan 256. The short motif at asparagine 235–alanine 237 is the NPA 2 element. The helical transmembrane segment at isoleucine 257 to isoleucine 277 threads the bilayer. The Cytoplasmic portion of the chain corresponds to arginine 278 to proline 286.

Belongs to the MIP/aquaporin (TC 1.A.8) family. PIP (TC 1.A.8.11) subfamily. In terms of tissue distribution, expressed in leaves, roots, stems, flowers and fruits, with highest levels in roots.

Its subcellular location is the cell membrane. Functionally, water channel required to facilitate the transport of water across cell membrane; mercury-insensitive. Promotes primary root elongation and root hair formation. Contributes to the tolerance to multiple abiotic stresses including salt (NaCl), cold and water deprivation, by modulating cytosolic K(+)/Na(+) ratio, maintaining osmotic balance, and reducing membrane injury (e.g. oxidative injury). Also regulates the expression of abscisic acid (ABA)-responsive genes during dehydration and salt stresses. This chain is Aquaporin PIP1-1, found in Musa acuminata (Banana).